A 255-amino-acid polypeptide reads, in one-letter code: Imidazole glycerol phosphate synthase subunit HisF (255 aa).

Active-site residues include Asp12 and Asp131.

This sequence belongs to the HisA/HisF family. As to quaternary structure, heterodimer of HisH and HisF.

Its subcellular location is the cytoplasm. It carries out the reaction 5-[(5-phospho-1-deoxy-D-ribulos-1-ylimino)methylamino]-1-(5-phospho-beta-D-ribosyl)imidazole-4-carboxamide + L-glutamine = D-erythro-1-(imidazol-4-yl)glycerol 3-phosphate + 5-amino-1-(5-phospho-beta-D-ribosyl)imidazole-4-carboxamide + L-glutamate + H(+). Its pathway is amino-acid biosynthesis; L-histidine biosynthesis; L-histidine from 5-phospho-alpha-D-ribose 1-diphosphate: step 5/9. Its function is as follows. IGPS catalyzes the conversion of PRFAR and glutamine to IGP, AICAR and glutamate. The HisF subunit catalyzes the cyclization activity that produces IGP and AICAR from PRFAR using the ammonia provided by the HisH subunit. The protein is Imidazole glycerol phosphate synthase subunit HisF of Ruthia magnifica subsp. Calyptogena magnifica.